The primary structure comprises 95 residues: Translation initiation factor 1A (95 aa).

The S1-like domain occupies 7-81 (GRKNLRMPED…DKADVTWRYE (75 aa)).

Belongs to the eIF-1A family.

In terms of biological role, seems to be required for maximal rate of protein biosynthesis. Enhances ribosome dissociation into subunits and stabilizes the binding of the initiator Met-tRNA(I) to 40 S ribosomal subunits. The chain is Translation initiation factor 1A (eIF1A) from Halobacterium salinarum (strain ATCC 29341 / DSM 671 / R1).